The primary structure comprises 137 residues: Large-conductance mechanosensitive channel (137 aa).

The next 2 helical transmembrane spans lie at 9–29 and 79–99; these read AFAV…GAAF and IQSV…VKAI.

This sequence belongs to the MscL family. As to quaternary structure, homopentamer.

The protein localises to the cell inner membrane. Its function is as follows. Channel that opens in response to stretch forces in the membrane lipid bilayer. May participate in the regulation of osmotic pressure changes within the cell. In Pseudomonas fluorescens (strain Pf0-1), this protein is Large-conductance mechanosensitive channel.